Consider the following 327-residue polypeptide: Sideroflexin FSF1 (327 aa).

An N-acetylalanine modification is found at Ala-2. 4 consecutive transmembrane segments (helical) span residues 98–118, 143–163, 179–199, and 272–292; these read NLVVTVGMLTPGLGTAGTVFW, SQLLTNYAAAVTASCGVALGL, LILGRLVPFAAVVSAGIVNVF, and ANLGLISVTMFSALPFALGIF.

The protein belongs to the sideroflexin family.

The protein localises to the mitochondrion membrane. Functionally, mitochondrial amino-acid transporter that mediates transport of serine into mitochondria. This is Sideroflexin FSF1 from Saccharomyces cerevisiae (strain ATCC 204508 / S288c) (Baker's yeast).